Consider the following 301-residue polypeptide: MSADMAAQSESGEGGDDGRADGGLGDRLVYLAVLSRPRFWLYLAGPVVVGVAAAASALADLFGLEPVALFAYFLVPANVFLYGVNDVFDADVDEANPKKDDREARWRGDPVNTVVVAASGLLGVGLFAVAPRVAWPWLAAHFFLAVEYSAPPFRFKTTPLLDSVSNGLYVLPGVAAYAAVSGSNPPMLAVAGAWLWTMGMHTFSAIPDIEPDREAGIRTTATALGERRTYWYCAATWVLAAVAFAAVDLRLGALLAAYPVVVLGIVAAGVDVDRAYWWYPVINTVVGMLITLGALWRLVNG.

Residues M1 to A20 form a disordered region. Helical transmembrane passes span F39–A59, L61–L81, P110–A130, V133–F153, L160–V180, P186–I206, T229–L249, G252–V272, and Y276–W296.

This sequence belongs to the UbiA prenyltransferase family.

The protein localises to the cell membrane. It carries out the reaction all-trans-lycopene + dimethylallyl diphosphate + H2O = dihydroisopentenyldehydrorhodopin + diphosphate. It catalyses the reaction isopentenyldehydrorhodopin + dimethylallyl diphosphate + H2O = dihydrobisanhydrobacterioruberin + diphosphate. Its pathway is carotenoid biosynthesis. Functionally, involved in the biosynthesis of the acyclic C50 carotenoid bacterioruberin (BR). Acts as a bifunctional elongase/hydratase that catalyzes the elongation of lycopene by attaching a C(5) isoprene unit at C-2, as well as the hydroxylation of the previous end of the molecule. The enzyme acts at both ends of the substrate, and catalyzes the conversion of lycopene to the C(45) intermediate dihydroisopentenyldehydrorhodopin (DH-IDR) and the conversion of isopentenyldehydrorhodopin (IDR) to the C(50) carotenoid dihydrobisanhydrobacterioruberin (DH-BABR). Can also catalyze the conversion of lycopene to tetrahydrobisanhydrobacterioruberin (TH-BABR). This is Lycopene elongase/hydratase from Haloferax volcanii (strain ATCC 29605 / DSM 3757 / JCM 8879 / NBRC 14742 / NCIMB 2012 / VKM B-1768 / DS2) (Halobacterium volcanii).